A 466-amino-acid polypeptide reads, in one-letter code: Adenosylhomocysteinase (466 aa).

Positions 57, 132, and 192 each coordinate substrate. An NAD(+)-binding site is contributed by 193-195 (TTT). Residues Lys222 and Asp226 each coordinate substrate. Residues Asn227, 256 to 261 (GYGDVG), Glu279, Asn314, 335 to 337 (IGH), and Asn380 each bind NAD(+).

It belongs to the adenosylhomocysteinase family. NAD(+) is required as a cofactor.

The protein localises to the cytoplasm. It catalyses the reaction S-adenosyl-L-homocysteine + H2O = L-homocysteine + adenosine. It functions in the pathway amino-acid biosynthesis; L-homocysteine biosynthesis; L-homocysteine from S-adenosyl-L-homocysteine: step 1/1. Its function is as follows. May play a key role in the regulation of the intracellular concentration of adenosylhomocysteine. The polypeptide is Adenosylhomocysteinase (Brucella anthropi (strain ATCC 49188 / DSM 6882 / CCUG 24695 / JCM 21032 / LMG 3331 / NBRC 15819 / NCTC 12168 / Alc 37) (Ochrobactrum anthropi)).